The chain runs to 423 residues: Core protease OPG082 (423 aa).

Active-site residues include H241, D248, and C328.

Belongs to the peptidase C57 family.

Its subcellular location is the virion. In terms of biological role, late protein responsible for processing most or all of the viral core and membrane proteins known to undergo morphogenesis-associated proteolysis. These proteolytic events are involved in the transformation of immature virions (IV) into mature virions (MV). Probably cleaves at least the OPG129, OPG136, OPG098, and OPG144 precursors preferentially at Ala-Gly-|-Ala motifs. Also seems to process Ala-Gly-|-Ser and Ala-Gly-|-Thr motifs. The polypeptide is Core protease OPG082 (OPG083) (Homo sapiens (Human)).